Reading from the N-terminus, the 479-residue chain is Anaerobic nitric oxide reductase flavorubredoxin (479 aa).

Residues 30 to 210 are zinc metallo-hydrolase; sequence LRGSSYNSYL…PFSRLVTPKI (181 aa). Positions 79, 81, 83, 147, 166, and 227 each coordinate Fe cation. Residues 254-393 enclose the Flavodoxin-like domain; the sequence is ITIFYDTMSN…LCREHGREIA (140 aa). Residues 260-264 and 342-369 each bind FMN; these read TMSNN and AFGS…EMSL. Residues 423–474 enclose the Rubredoxin-like domain; that stretch reads GPRMQCSVCQWIYDPAKGEPMQDVAPGTPWSEVPDNFLCPECSLGKDVFEEL. The Fe cation site is built by cysteine 428, cysteine 431, cysteine 461, and cysteine 464.

This sequence in the N-terminal section; belongs to the zinc metallo-hydrolase group 3 family. In terms of assembly, homotetramer. It depends on Fe cation as a cofactor. The cofactor is FMN.

It is found in the cytoplasm. It functions in the pathway nitrogen metabolism; nitric oxide reduction. Functionally, anaerobic nitric oxide reductase; uses NADH to detoxify nitric oxide (NO), protecting several 4Fe-4S NO-sensitive enzymes. Has at least 2 reductase partners, only one of which (NorW, flavorubredoxin reductase) has been identified. NO probably binds to the di-iron center; electrons enter from the NorW at rubredoxin and are transferred sequentially to the FMN center and the di-iron center. Also able to function as an aerobic oxygen reductase. In Shigella dysenteriae serotype 1 (strain Sd197), this protein is Anaerobic nitric oxide reductase flavorubredoxin.